The chain runs to 223 residues: Crossover junction endodeoxyribonuclease RuvC (223 aa).

Residues aspartate 12, glutamate 73, and aspartate 146 contribute to the active site. Aspartate 12, glutamate 73, and aspartate 146 together coordinate Mg(2+). Positions 182–223 (QGKLGKAKSTLNARNNAQVTGDAQVRAGHPSQFERPDRADPR) are disordered. Positions 190 to 202 (STLNARNNAQVTG) are enriched in polar residues. Basic and acidic residues predominate over residues 213–223 (QFERPDRADPR).

The protein belongs to the RuvC family. In terms of assembly, homodimer which binds Holliday junction (HJ) DNA. The HJ becomes 2-fold symmetrical on binding to RuvC with unstacked arms; it has a different conformation from HJ DNA in complex with RuvA. In the full resolvosome a probable DNA-RuvA(4)-RuvB(12)-RuvC(2) complex forms which resolves the HJ. It depends on Mg(2+) as a cofactor.

It localises to the cytoplasm. The catalysed reaction is Endonucleolytic cleavage at a junction such as a reciprocal single-stranded crossover between two homologous DNA duplexes (Holliday junction).. In terms of biological role, the RuvA-RuvB-RuvC complex processes Holliday junction (HJ) DNA during genetic recombination and DNA repair. Endonuclease that resolves HJ intermediates. Cleaves cruciform DNA by making single-stranded nicks across the HJ at symmetrical positions within the homologous arms, yielding a 5'-phosphate and a 3'-hydroxyl group; requires a central core of homology in the junction. The consensus cleavage sequence is 5'-(A/T)TT(C/G)-3'. Cleavage occurs on the 3'-side of the TT dinucleotide at the point of strand exchange. HJ branch migration catalyzed by RuvA-RuvB allows RuvC to scan DNA until it finds its consensus sequence, where it cleaves and resolves the cruciform DNA. The sequence is that of Crossover junction endodeoxyribonuclease RuvC from Corynebacterium efficiens (strain DSM 44549 / YS-314 / AJ 12310 / JCM 11189 / NBRC 100395).